A 435-amino-acid chain; its full sequence is Tol-Pal system protein TolB (435 aa).

The first 26 residues, 1–26 (MKIFSPIRLVLAIAALMSVFSAPAFA), serve as a signal peptide directing secretion.

Belongs to the TolB family. As to quaternary structure, the Tol-Pal system is composed of five core proteins: the inner membrane proteins TolA, TolQ and TolR, the periplasmic protein TolB and the outer membrane protein Pal. They form a network linking the inner and outer membranes and the peptidoglycan layer.

It localises to the periplasm. Part of the Tol-Pal system, which plays a role in outer membrane invagination during cell division and is important for maintaining outer membrane integrity. This is Tol-Pal system protein TolB from Agrobacterium fabrum (strain C58 / ATCC 33970) (Agrobacterium tumefaciens (strain C58)).